An 825-amino-acid polypeptide reads, in one-letter code: NT-3 growth factor receptor (825 aa).

The N-terminal stretch at 1-31 (MDVSLCPAKCSFWRIFLLGSVWLDYVGSVLA) is a signal peptide. Intrachain disulfides connect C32/C38 and C36/C45. Residues 32 to 429 (CPANCVCSKT…TVTHKPEEDT (398 aa)) are Extracellular-facing. N-linked (GlcNAc...) asparagine glycosylation is found at N68, N72, and N79. LRR repeat units lie at residues 104–125 (GLQKLTIKNSGLRSIQPRAFAK) and 128–149 (HLRYINLSSNRLTTLSWQLFQT). N133 and N163 each carry an N-linked (GlcNAc...) asparagine glycan. One can recognise an LRRCT domain in the interval 160-209 (NFFNCSCDIRWMQLWQEQGEARLNSQNLYCINADGSQLPLFRMNISQCDL). 2 disulfides stabilise this stretch: C164-C189 and C166-C207. N-linked (GlcNAc...) asparagine glycans are attached at residues N203, N218, N232, N259, N267, N272, and N294. Ig-like C2-type domains lie at 210 to 300 (PEIS…VALT) and 309 to 382 (SLEE…IAKN). An intrachain disulfide couples C231 to C284. Cysteines 320 and 362 form a disulfide. N-linked (GlcNAc...) asparagine glycans are attached at residues N375 and N388. A helical transmembrane segment spans residues 430–453 (FGVSIAVGLAAFACVLLVVLFIMI). The Cytoplasmic segment spans residues 454–825 (NKYGRRSKFG…ATPIYLDILG (372 aa)). Phosphoserine is present on S493. A Phosphotyrosine; by autocatalysis modification is found at Y516. The Protein kinase domain occupies 538 to 825 (IVLKRELGEG…ATPIYLDILG (288 aa)). Residues 544-552 (LGEGAFGKV) and K572 each bind ATP. Catalysis depends on D679, which acts as the Proton acceptor. 3 positions are modified to phosphotyrosine; by autocatalysis: Y705, Y709, and Y710.

The protein belongs to the protein kinase superfamily. Tyr protein kinase family. Insulin receptor subfamily. In terms of assembly, exists in a dynamic equilibrium between monomeric (low affinity) and dimeric (high affinity) structures. Binds SH2B2. Interacts with SQSTM1 and KIDINS220. Interacts with PTPRS. Interacts with MAPK8IP3/JIP3. Post-translationally, ligand-mediated auto-phosphorylation.

The protein localises to the membrane. It carries out the reaction L-tyrosyl-[protein] + ATP = O-phospho-L-tyrosyl-[protein] + ADP + H(+). Its function is as follows. Receptor tyrosine kinase involved in nervous system and probably heart development. Upon binding of its ligand NTF3/neurotrophin-3, NTRK3 autophosphorylates and activates different signaling pathways, including the phosphatidylinositol 3-kinase/AKT and the MAPK pathways, that control cell survival and differentiation. This chain is NT-3 growth factor receptor (NTRK3), found in Saimiri boliviensis boliviensis (Bolivian squirrel monkey).